A 791-amino-acid chain; its full sequence is Splicing factor 3A subunit 1 (791 aa).

Positions 1 to 41 (MQAGPVQAVPPPPPVATESKQPIEEEASSKEDPTPSKPVVG) are disordered. A Glycyl lysine isopeptide (Lys-Gly) (interchain with G-Cter in SUMO2) cross-link involves residue Lys-20. A compositionally biased stretch (basic and acidic residues) spans 21-34 (QPIEEEASSKEDPT). An SURP motif 1 repeat occupies 52 to 94 (IVDKTASFVARNGPEFEARIRQNEINNPKFNFLNPNDPYHAYY). Lys-55 is subject to N6-acetyllysine. Lys-131 participates in a covalent cross-link: Glycyl lysine isopeptide (Lys-Gly) (interchain with G-Cter in SUMO2). The SURP motif 2 repeat unit spans residues 166–208 (VVKLTAQFVARNGRQFLTQLMQKEQRNYQFDFLRPQHSLFNYF). The interval 318 to 411 (GESEEVEMEV…APAPDEYLVS (94 aa)) is disordered. Residues Ser-320 and Ser-329 each carry the phosphoserine modification. The span at 320–336 (SEEVEMEVESDEEDQEK) shows a compositional bias: acidic residues. The span at 340-351 (TPSQLDQDTQVQ) shows a compositional bias: polar residues. Acidic residues predominate over residues 352–362 (DMDEGSDDEEE). Ser-357 carries the post-translational modification Phosphoserine. Residues 366-382 (VPPPPETPMPPPLPPTP) show a composition bias toward pro residues. The segment covering 386–395 (IVRKDYDPKA) has biased composition (basic and acidic residues). Ser-411 carries the phosphoserine modification. A Glycyl lysine isopeptide (Lys-Gly) (interchain with G-Cter in SUMO2) cross-link involves residue Lys-422. Residue Ser-449 is modified to Phosphoserine. Phosphotyrosine is present on Tyr-454. A compositionally biased stretch (basic and acidic residues) spans 486–500 (IGEEEIQKPEEKVTW). 3 disordered regions span residues 486 to 516 (IGEE…AAQA), 528 to 582 (HKAK…AMPP), and 664 to 684 (PMPP…KKLK). Lys-497 is covalently cross-linked (Glycyl lysine isopeptide (Lys-Gly) (interchain with G-Cter in SUMO2)). Ser-506 carries the phosphoserine modification. Polar residues predominate over residues 507–516 (MARTQQAAQA). A Glycyl lysine isopeptide (Lys-Gly) (interchain with G-Cter in SUMO2) cross-link involves residue Lys-540. The segment covering 561 to 570 (ATNIPSSAPP) has biased composition (polar residues). Pro residues predominate over residues 664–673 (PMPPVHPPPP). A required and sufficient for nuclear import region spans residues 678–700 (PPSKKLKTEDSLMPEEEFLRRNK). Residue Lys-684 forms a Glycyl lysine isopeptide (Lys-Gly) (interchain with G-Cter in SUMO2) linkage. One can recognise a Ubiquitin-like domain in the interval 705–788 (IKVQVPNMQD…IHLALKERGG (84 aa)). Phosphotyrosine is present on Tyr-757.

In terms of assembly, component of the 17S U2 SnRNP complex, a ribonucleoprotein complex that contains small nuclear RNA (snRNA) U2 and a number of specific proteins. Part of the SF3A subcomplex of the 17S U2 SnRNP complex which is composed of three subunits; SF3A3/SAP61, SF3A2/SAP62 and SF3A1/SAP114. SF3A associates with the splicing factor SF3B and a 12S RNA unit to form the mature 17S U2 small nuclear ribonucleoprotein complex (17S U2 snRNP). SF3A1 functions as a scaffold that interacts directly with both SF3A2 and SF3A3. Identified in the spliceosome 'E' complex, a precursor of the spliceosome 'A' complex. Identified in the spliceosome 'A' and 'B' complexes. Identified in the spliceosome 'C' complex. Interacts with P2RX6; resulting in a reduction of the splicing activity.

The protein localises to the nucleus. It localises to the nucleus speckle. In terms of biological role, component of the 17S U2 SnRNP complex of the spliceosome, a large ribonucleoprotein complex that removes introns from transcribed pre-mRNAs. The 17S U2 SnRNP complex (1) directly participates in early spliceosome assembly and (2) mediates recognition of the intron branch site during pre-mRNA splicing by promoting the selection of the pre-mRNA branch-site adenosine, the nucleophile for the first step of splicing. Within the 17S U2 SnRNP complex, SF3A1 is part of the SF3A subcomplex that contributes to the assembly of the 17S U2 snRNP, and the subsequent assembly of the pre-spliceosome 'E' complex and the pre-catalytic spliceosome 'A' complex. Involved in pre-mRNA splicing as a component of pre-catalytic spliceosome 'B' complexes. The protein is Splicing factor 3A subunit 1 (Sf3a1) of Mus musculus (Mouse).